A 919-amino-acid polypeptide reads, in one-letter code: MSKKRVYELARELGIDNKELISRLEKLGIAVKSHSGTLEDSEVDRVTKEFHARGSREMVEQRIKTTVIRRRAVRVPEKEAVLEKVPVEMEKEMGKALPEEVPEKIAPSRETPPAKVVKPRPVVPEKKIPAAGEKPLAPPEKPAEPVAPPIAEILKQEKIQPPEKFAEEPLKKPAVIEPEKAAAAPKAVPGEAKPLPRTERVQEQGKPVPGRKEGRTPVSRRPAETRFPAKPAPQPEMARKQVVAAAPGRAVPQEKGAPKTEAEKPRKKIKLPDETRKGEQIPARKKTVLKKGPEKTDFRGTLEEEIIERAVRPPRWKEEKKAAPVKMKKTEITVPKAIKRRIRVGEAITVGDLAKKMGVKAGEVINKLMRMGLMATINQSIDFDAASLIATEFEYQVEPAGMEYDESMFKVESSVENLKPRAPVVTIMGHVDHGKTSLLDAIRKTRVTEGEAGGITQAIGAYRVNLKGREIVFLDTPGHEAFTAMRARGAQVTDIVVLVVAADDGVMDQTVEAINHSKIAGVPIIVAINKIDKPEADPGRIKQALTEYELVPEEWGGDTIFSEVSAKQKIGIEELLELILLQADVLELKADPDRPARGVVIEARLDRGRGPVATVLIQEGTLHEGDAFVSKTEYGRVRAMNDDQGRRIKEAGPATPVEVIGFSRVPQASAEFNAVEDEKKARSIGDYWMRKEREKELSATSKITLEQLYEKMKEGVKELNVILRADVQGSLEALSDALTKLSTDDIKLKVIHGSTGAITETDVMLASASNAIIIGFNVRPDARVAEIAEAEGVDIKLYDIIYNVIADVRAAMEGLLEPEYREVVLGRAEVRDLFRVPKVGTVAGSFVIDGKVTRKANVKLVRDGVVVFDGKIGSLKRFKDDVKEVLSGFECGIGIEGFNDLRMGDMIEAYINEKVERKL.

Basic and acidic residues predominate over residues 93–107; it reads MGKALPEEVPEKIAP. 2 disordered regions span residues 93–145 and 158–279; these read MGKA…PAEP and KIQP…RKGE. Residues 136–145 are compositionally biased toward pro residues; the sequence is LAPPEKPAEP. Residues 158-171 show a composition bias toward basic and acidic residues; sequence KIQPPEKFAEEPLK. A compositionally biased stretch (low complexity) spans 172–193; sequence KPAVIEPEKAAAAPKAVPGEAK. 2 stretches are compositionally biased toward basic and acidic residues: residues 194-203 and 256-279; these read PLPRTERVQE and GAPK…RKGE. The tr-type G domain occupies 420–589; it reads PRAPVVTIMG…LLQADVLELK (170 aa). The G1 stretch occupies residues 429–436; it reads GHVDHGKT. 429–436 provides a ligand contact to GTP; it reads GHVDHGKT. The segment at 454 to 458 is G2; sequence GITQA. The tract at residues 475–478 is G3; the sequence is DTPG. Residues 475–479 and 529–532 each bind GTP; these read DTPGH and NKID. The G4 stretch occupies residues 529–532; the sequence is NKID. A G5 region spans residues 565–567; it reads SAK.

Belongs to the TRAFAC class translation factor GTPase superfamily. Classic translation factor GTPase family. IF-2 subfamily.

The protein localises to the cytoplasm. One of the essential components for the initiation of protein synthesis. Protects formylmethionyl-tRNA from spontaneous hydrolysis and promotes its binding to the 30S ribosomal subunits. Also involved in the hydrolysis of GTP during the formation of the 70S ribosomal complex. The sequence is that of Translation initiation factor IF-2 from Syntrophus aciditrophicus (strain SB).